The sequence spans 464 residues: L-aspartate oxidase (464 aa).

FAD is bound by residues 8–11 and 37–44; these read SGLA and NSYLAQAG. Arginine 248 serves as the catalytic Proton donor/acceptor. FAD is bound by residues glutamate 329 and 345-346; that span reads SL.

The protein belongs to the FAD-dependent oxidoreductase 2 family. NadB subfamily. FAD serves as cofactor.

It is found in the cytoplasm. It catalyses the reaction L-aspartate + O2 = iminosuccinate + H2O2. Its pathway is cofactor biosynthesis; NAD(+) biosynthesis; iminoaspartate from L-aspartate (oxidase route): step 1/1. Catalyzes the oxidation of L-aspartate to iminoaspartate, the first step in the de novo biosynthesis of NAD(+). The sequence is that of L-aspartate oxidase (nadB) from Pyrococcus furiosus (strain ATCC 43587 / DSM 3638 / JCM 8422 / Vc1).